The sequence spans 281 residues: MKKTIYKVLVSFYQYVGLGKKFHPSHDTVLIIGGSSNELGIELCETFIEDYHTKVINIDTIDSINGKNARRSEKLYTFISCKDFSDIKCLEESMLYLQNLEIIPTVLINNMQEGIESTLLKEDKFLRLDEESLNEFEKIVRYNLQSVILITKFCLSNIFPKVQAEAQEKAKGFYIVNISSVLTLKPCKSGTHFITSKCGINSFHDGITSELKLKDSNLNVKTLIAYLPSFESEAHWKRLSPSISKHLVHCLLEGRYGDTILESKRSIGDILLITGFKSSFT.

NADP(+) contacts are provided by Leu-39, Thr-60, Lys-67, Lys-152, and Lys-197. Catalysis depends on Lys-197, which acts as the Lowers pKa of active site Tyr.

Belongs to the short-chain dehydrogenases/reductases (SDR) family.

Its function is as follows. May be involved in the regulation of dNTP production. Induces the SOS system when expressed in E.coli, therefore, it may play a role in DNA metabolism and/or in genome stability. The sequence is that of Oxidoreductase-like protein SRL4 (SRL4) from Saccharomyces cerevisiae (strain ATCC 204508 / S288c) (Baker's yeast).